Here is a 1123-residue protein sequence, read N- to C-terminus: Mediator of RNA polymerase II transcription subunit 14 (1123 aa).

Residues 450–484 (KQSDASDEQQNNIEPNEESLEDLREDNNEDESEPQ) are disordered.

The protein belongs to the Mediator complex subunit 14 family. Component of the Mediator complex.

Its subcellular location is the nucleus. Its function is as follows. Component of the Mediator complex, a coactivator involved in the regulated transcription of nearly all RNA polymerase II-dependent genes. Mediator functions as a bridge to convey information from gene-specific regulatory proteins to the basal RNA polymerase II transcription machinery. Mediator is recruited to promoters by direct interactions with regulatory proteins and serves as a scaffold for the assembly of a functional preinitiation complex with RNA polymerase II and the general transcription factors. The protein is Mediator of RNA polymerase II transcription subunit 14 (RGR1) of Debaryomyces hansenii (strain ATCC 36239 / CBS 767 / BCRC 21394 / JCM 1990 / NBRC 0083 / IGC 2968) (Yeast).